We begin with the raw amino-acid sequence, 396 residues long: 1-deoxy-D-xylulose 5-phosphate reductoisomerase (396 aa).

NADPH contacts are provided by Thr-10, Gly-11, Ser-12, Ile-13, Gly-36, Lys-37, Asn-38, and Asn-124. Lys-125 serves as a coordination point for 1-deoxy-D-xylulose 5-phosphate. Glu-126 lines the NADPH pocket. Mn(2+) is bound at residue Asp-150. Residues Ser-151, Glu-152, Ser-186, and His-209 each contribute to the 1-deoxy-D-xylulose 5-phosphate site. Glu-152 contributes to the Mn(2+) binding site. An NADPH-binding site is contributed by Gly-215. 1-deoxy-D-xylulose 5-phosphate-binding residues include Ser-222, Asn-227, Lys-228, and Glu-231. Glu-231 is a binding site for Mn(2+).

This sequence belongs to the DXR family. The cofactor is Mg(2+). It depends on Mn(2+) as a cofactor.

It carries out the reaction 2-C-methyl-D-erythritol 4-phosphate + NADP(+) = 1-deoxy-D-xylulose 5-phosphate + NADPH + H(+). It participates in isoprenoid biosynthesis; isopentenyl diphosphate biosynthesis via DXP pathway; isopentenyl diphosphate from 1-deoxy-D-xylulose 5-phosphate: step 1/6. In terms of biological role, catalyzes the NADPH-dependent rearrangement and reduction of 1-deoxy-D-xylulose-5-phosphate (DXP) to 2-C-methyl-D-erythritol 4-phosphate (MEP). The protein is 1-deoxy-D-xylulose 5-phosphate reductoisomerase of Glaesserella parasuis serovar 5 (strain SH0165) (Haemophilus parasuis).